A 160-amino-acid polypeptide reads, in one-letter code: MD-2-related lipid-recognition protein ROSY1 (160 aa).

The N-terminal stretch at M1 to C23 is a signal peptide.

Interacts with SYT1. In terms of tissue distribution, expressed exclusively in roots, in epidermis and cortex cells of the root elongation zone, and lateral root cap cells at the root tip.

It is found in the cytoplasm. Its function is as follows. Involved in the regulation of gravitropic response and basipetal auxin transport in roots. Involved in salt stress tolerance. May facilitate membrane trafficking and asymmetric cell elongation via SYT1. Binds stigmasterol and dipalmitoyl phosphoethanolamine (DPPE) in vitro. The sequence is that of MD-2-related lipid-recognition protein ROSY1 from Arabidopsis thaliana (Mouse-ear cress).